Here is a 132-residue protein sequence, read N- to C-terminus: Small ribosomal subunit protein uS8 (132 aa).

The protein belongs to the universal ribosomal protein uS8 family. In terms of assembly, part of the 30S ribosomal subunit. Contacts proteins S5 and S12.

Its function is as follows. One of the primary rRNA binding proteins, it binds directly to 16S rRNA central domain where it helps coordinate assembly of the platform of the 30S subunit. This is Small ribosomal subunit protein uS8 from Brucella abortus (strain S19).